The sequence spans 160 residues: Protein max (160 aa).

Acidic residues predominate over residues 1-13; sequence MSDNDDIEVESDE. The tract at residues 1 to 40 is disordered; sequence MSDNDDIEVESDEEQPRFQSAADKRAHHNALERKRRDHIK. An N-acetylserine modification is found at serine 2. Phosphoserine is present on residues serine 2 and serine 11. The region spanning 23–74 is the bHLH domain; sequence DKRAHHNALERKRRDHIKDSFHSLRDSVPSLQGEKASRAQILDKATEYIQYM. Residues 29–40 show a composition bias toward basic and acidic residues; it reads NALERKRRDHIK. Residue lysine 66 is modified to N6-acetyllysine. Residues 81-102 are leucine-zipper; the sequence is HQQDIDDLKRQNALLEQQVRAL. Residues 103-160 form a disordered region; the sequence is EKARSSAQLQTNYPSSDNSLYTNAKGSTISAFDGGSDSSSESEPEEPQSRKKLRMEAS. The residue at position 107 (serine 107) is a Phosphoserine. The span at 107–132 shows a compositional bias: polar residues; it reads SSAQLQTNYPSSDNSLYTNAKGSTIS. The Nuclear localization signal motif lies at 152–156; the sequence is RKKLR. Residues lysine 153 and lysine 154 each carry the N6-acetyllysine modification.

This sequence belongs to the MAX family. As to quaternary structure, efficient DNA binding requires dimerization with another bHLH protein. Binds DNA as a heterodimer with MYC or MAD. Part of the E2F6.com-1 complex in G0 phase composed of E2F6, MGA, MAX, TFDP1, CBX3, BAT8, EUHMTASE1, RING1, RNF2, MBLR, L3MBTL2 and YAF2. Component of some MLL1/MLL complex, at least composed of the core components KMT2A/MLL1, ASH2L, HCFC1/HCF1, WDR5 and RBBP5, as well as the facultative components BACC1, CHD8, E2F6, HSP70, INO80C, KANSL1, LAS1L, MAX, MCRS1, MGA, MYST1/MOF, PELP1, PHF20, PRP31, RING2, RUVB1/TIP49A, RUVB2/TIP49B, SENP3, TAF1, TAF4, TAF6, TAF7, TAF9 and TEX10. Interacts with SPAG9. The heterodimer MYC:MAX interacts with ABI1; the interaction may enhance MYC:MAX transcriptional activity. In terms of processing, reversible lysine acetylation might regulate the nuclear-cytoplasmic shuttling of specific Max complexes. In terms of tissue distribution, high levels found in the brain, heart and lung while lower levels are seen in the liver, kidney and skeletal muscle.

The protein resides in the nucleus. The protein localises to the cell projection. It is found in the dendrite. Its function is as follows. Transcription regulator. Forms a sequence-specific DNA-binding protein complex with MYC or MAD which recognizes the core sequence 5'-CAC[GA]TG-3'. The MYC:MAX complex is a transcriptional activator, whereas the MAD:MAX complex is a repressor. May repress transcription via the recruitment of a chromatin remodeling complex containing H3 'Lys-9' histone methyltransferase activity. Represses MYC transcriptional activity from E-box elements. The protein is Protein max of Homo sapiens (Human).